The following is a 211-amino-acid chain: MEAIAKHDFSATADDELSFRKTQILKILNMEDDSNWYRAELDGKEGLIPSNYIEMKNHDWYYGRITRADAEKLLSNKHEGAFLIRISESSPGDFSLSVKCPDGVQHFKVLRDAQSKFFLWVVKFNSLNELVEYHRTASVSRSQDVKLRDMIPEEMLVQALYDFVPQESGELDFRRGDVITVTDRSDENWWNGEIGNRKGIFPATYVTPYHS.

The SH3 1 domain maps to 1–58; that stretch reads MEAIAKHDFSATADDELSFRKTQILKILNMEDDSNWYRAELDGKEGLIPSNYIEMKNH. The SH2 domain maps to 60-151; the sequence is WYYGRITRAD…SQDVKLRDMI (92 aa). Residues 152–211 enclose the SH3 2 domain; sequence PEEMLVQALYDFVPQESGELDFRRGDVITVTDRSDENWWNGEIGNRKGIFPATYVTPYHS.

Belongs to the GRB2/sem-5/DRK family. Interacts with autophosphorylated sev via SH2 domain and Sos and Dab via SH3 domains. Binds to tyrosine phosphorylated Dab via the SH2 domain.

The protein localises to the membrane. In terms of biological role, required for proper signaling by sevenless. May act to stimulate the ability of Sos to catalyze Ras1 activation by linking sevenless and Sos in a signaling complex. The protein is Protein E(sev)2B (drk) of Drosophila simulans (Fruit fly).